A 706-amino-acid chain; its full sequence is Putative pentatricopeptide repeat-containing protein At3g47840 (706 aa).

PPR repeat units lie at residues 39-69, 70-104, 107-141, 142-172, 173-203, 208-242, 243-273, 274-308, 309-343, 344-374, 375-409, 410-444, 445-475, 476-510, 511-541, and 547-577; these read VKFDPNSHLRSLINAGNLRAARQVFDKMPHG, DIVSWTSIIKRYVTANNSDEALILFSAMRVVDHAV, DTSVLSVVLKACGQSSNIAYGESLHAYAVKTSLLS, SVYVGSSLLDMYKRVGKIDKSCRVFSEMPFR, NAVTWTAIITGLVHAGRYKEGLTYFSEMSRS, DTYTFAIALKACAGLRQVKYGKAIHTHVIVRGFVT, TLCVANSLATMYTECGEMQDGLCLFENMSER, DVVSWTSLIVAYKRIGQEVKAVETFIKMRNSQVPP, NEQTFASMFSACASLSRLVWGEQLHCNVLSLGLND, SLSVSNSMMKMYSTCGNLVSASVLFQGMRCR, DIISWSTIIGGYCQAGFGEEGFKYFSWMRQSGTKP, TDFALASLLSVSGNMAVIEGGRQVHALALCFGLEQ, NSTVRSSLINMYSKCGSIKEASMIFGETDRD, DIVSLTAMINGYAEHGKSKEAIDLFEKSLKVGFRP, DSVTFISVLTACTHSGQLDLGFHYFNMMQET, and AKEHYGCMVDLLCRAGRLSDAEKMINEMSWK. A type E motif region spans residues 582-657; sequence VWTTLLIACK…EPGWSSIKIK (76 aa). A type E(+) motif region spans residues 658–688; that stretch reads DCVSAFVSGDRFHPQSEDIYNILELAVSGAE.

This sequence belongs to the PPR family. PCMP-E subfamily.

In Arabidopsis thaliana (Mouse-ear cress), this protein is Putative pentatricopeptide repeat-containing protein At3g47840 (PCMP-E43).